A 651-amino-acid chain; its full sequence is Forkhead box protein K2 (651 aa).

Residues 1 to 13 (MAAAAALSGAGAP) are compositionally biased toward low complexity. A disordered region spans residues 1–29 (MAAAAALSGAGAPPAGGGAGGGGSPPGGW). A compositionally biased stretch (gly residues) spans 14–26 (PAGGGAGGGGSPP). A Phosphoserine modification is found at S24. The FHA domain maps to 48-119 (VTIGRNSSQG…NGVFVDGVFQ (72 aa)). The required for interaction with DVL2 and SUDS3 stretch occupies residues 120–162 (RRGAPPLQLPRVCTFRFPSTNIKITFTALSSEKREKQEAPESP). Omega-N-methylarginine is present on R135. Disordered stretches follow at residues 150–171 (SEKREKQEAPESPVKPVQPHIS) and 194–251 (TISA…SKPP). Glycyl lysine isopeptide (Lys-Gly) (interchain with G-Cter in SUMO2) cross-links involve residues K152 and K155. The span at 194–203 (TISAANSCPS) shows a compositional bias: polar residues. S230 carries the phosphoserine modification. Over residues 233 to 249 (ENEKEASGGDSPKDDSK) the composition is skewed to basic and acidic residues. A DNA-binding region (fork-head) is located at residues 249–344 (KPPYSYAQLI…EQAFRKRRPR (96 aa)). The tract at residues 291–309 (KGWQNSIRHNLSLNRYFIK) is DNA-binding; major groove. Mg(2+) is bound by residues L301, S302, N304, and F307. DNA-binding; minor groove stretches follow at residues 319–323 (KGSFW) and 339–344 (RKRRPR). The segment at 350–399 (RTPLGPLSSRSAPASPNHAGVLSAHSSGAQTPESLSREGSPAPLEPEPGA) is disordered. Phosphoserine is present on S364. Residues 373–383 (AHSSGAQTPES) are compositionally biased toward polar residues. A phosphoserine mark is found at S389, S415, and S419. Residue K518 forms a Glycyl lysine isopeptide (Lys-Gly) (interchain with G-Cter in SUMO2) linkage. Position 590 is a phosphoserine (S590). Positions 601–614 (ASASLPTKRQNGDQ) are enriched in polar residues. The interval 601 to 623 (ASASLPTKRQNGDQAEQPELKRV) is disordered. Residue K624 forms a Glycyl lysine isopeptide (Lys-Gly) (interchain with G-Cter in SUMO2) linkage.

Component of SIN3A-, but not SIN3B-, containing multiprotein complexes. Interacts with DVL1, DVL2 (when phosphorylated) and DVL3; the interaction induces DVL2 nuclear translocation. Interacts with SUDS3. Interacts with BAP1 (when phosphorylated); leading to recruit the PR-DUB complex and repress FOXK2 target genes. Accessory component of the polycomb repressive deubiquitinase (PR-DUB) complex, at least composed of BAP1, one of ASXL1, ASXL2 or (probably) ASXL3 and one of MBD5 or MBD6. The PR-DUB core associates with a number of accessory proteins, including FOXK1, FOXK2, KDM1B, HCFC1 and OGT. Post-translationally, hyperphosphorylated during mitosis by CDK1 and, to a lower extent, CDK2. Phosphorylation at Ser-364 and Ser-419 affects stability by promoting degradation. Expressed in a wide range of adult brain regions, namely the piriform cortex, the major islands of Calleja and cells lining the lateral ventricles, the bed nucleus of stria terminalis, the paraventricular thalamic nucleus, habenula and all structures of the hippocampus. Also present in the hypothalamus, cerebral cortex and in the Purkinje cell layer in the cerebellum. Additionally expressed in dopamine neurons of the substantia and more sparsely in the ventral tegmental area.

It localises to the nucleus. It is found in the cytoplasm. Transcriptional regulator involved in different processes such as glucose metabolism, aerobic glycolysis and autophagy. Recognizes and binds the forkhead DNA sequence motif (5'-GTAAACA-3') and can both act as a transcription activator or repressor, depending on the context. Together with FOXK1, acts as a key regulator of metabolic reprogramming towards aerobic glycolysis, a process in which glucose is converted to lactate in the presence of oxygen. Acts by promoting expression of enzymes for glycolysis (such as hexokinase-2 (HK2), phosphofructokinase, pyruvate kinase (PKLR) and lactate dehydrogenase), while suppressing further oxidation of pyruvate in the mitochondria by up-regulating pyruvate dehydrogenase kinases PDK1 and PDK4. Probably plays a role in gluconeogenesis during overnight fasting, when lactate from white adipose tissue and muscle is the main substrate. Together with FOXK1, acts as a negative regulator of autophagy in skeletal muscle: in response to starvation, enters the nucleus, binds the promoters of autophagy genes and represses their expression, preventing proteolysis of skeletal muscle proteins. In addition to the 5'-GTAAACA-3' DNA motif, also binds the 5'-TGANTCA-3' palindromic DNA motif, and co-associates with JUN/AP-1 to activate transcription. Also able to bind to a minimal DNA heteroduplex containing a G/T-mismatch with 5'-TRT[G/T]NB-3' sequence. Binds to NFAT-like motifs (purine-rich) in the IL2 promoter. Positively regulates WNT/beta-catenin signaling by translocating DVL proteins into the nucleus. Accessory component of the polycomb repressive deubiquitinase (PR-DUB) complex; recruits the PR-DUB complex to specific FOXK2-bound genes. The chain is Forkhead box protein K2 from Mus musculus (Mouse).